Consider the following 504-residue polypeptide: Maturase K (504 aa).

The protein belongs to the intron maturase 2 family. MatK subfamily.

Its subcellular location is the plastid. It is found in the chloroplast. Functionally, usually encoded in the trnK tRNA gene intron. Probably assists in splicing its own and other chloroplast group II introns. The protein is Maturase K of Actinidia chinensis (Kiwi).